The chain runs to 319 residues: N-acyl-aromatic-L-amino acid amidohydrolase (carboxylate-forming) (319 aa).

The interval 1 to 210 is hydrolytic domain; it reads MCSLPVPREP…TVLDFIELFN (210 aa). Zn(2+)-binding residues include His21 and Glu24. Substrate is bound by residues Arg63 and 70–71; that span reads NR. His116 contacts Zn(2+). Residues Glu178 and Tyr288 each contribute to the substrate site. The shielding domain stretch occupies residues 211–318; the sequence is QGTAFPAFEM…PALTPAPSPA (108 aa).

The protein belongs to the AspA/AstE family. Aspartoacylase subfamily. Exists as a mixture of homodimers and homotetramer, both catalytically active. As to quaternary structure, (Microbial infection) Interacts with hepatitis C virus/HCV core protein. Requires Zn(2+) as cofactor.

It is found in the apical cell membrane. Its subcellular location is the cytoplasm. The enzyme catalyses an N-acyl-aromatic L-alpha-amino acid + H2O = an aromatic L-alpha-amino acid + a carboxylate. It catalyses the reaction an N-acetyl-L-cysteine-S-conjugate + H2O = an S-substituted L-cysteine + acetate. Plays an important role in deacetylating mercapturic acids in kidney proximal tubules. Also acts on N-acetyl-aromatic amino acids. This Homo sapiens (Human) protein is N-acyl-aromatic-L-amino acid amidohydrolase (carboxylate-forming) (ACY3).